The primary structure comprises 592 residues: Elongation factor 1 alpha-like protein (592 aa).

Disordered regions lie at residues 1-35 (MSRH…EEFR) and 78-159 (SSKA…KQNP). Over residues 12-32 (LDDYELDEEPGEEELTEEQEE) the composition is skewed to acidic residues. Residues 82–111 (GAKEKQNTDSQKEKKQNKSKEALADAKDPL) are compositionally biased toward basic and acidic residues. A compositionally biased stretch (polar residues) spans 113–124 (ESSNGIKNLSLN). Basic and acidic residues predominate over residues 137–151 (VKMKNSSESDNQPEK). One can recognise a tr-type G domain in the interval 175–401 (KPVVHLVVTG…DQLVPPEKPY (227 aa)). Positions 184–191 (GHVDSGKS) are G1. 184–191 (GHVDSGKS) provides a ligand contact to GTP. The tract at residues 240-244 (GVTMD) is G2. Positions 261 to 264 (DAPG) are G3. Residues 323–326 (NKLD) and 352–355 (FKTS) contribute to the GTP site. The tract at residues 323-326 (NKLD) is G4. The segment at 363-365 (SAI) is G5.

Belongs to the TRAFAC class translation factor GTPase superfamily. Classic translation factor GTPase family. As to quaternary structure, component of the Dom34-Hbs1 complex, also named Pelota-HBS1L complex, composed of dom34 and hbs1.

Its subcellular location is the cytoplasm. The enzyme catalyses GTP + H2O = GDP + phosphate + H(+). GTPase component of the Dom34-Hbs1 complex, a complex that recognizes stalled ribosomes and triggers the No-Go Decay (NGD) pathway. The Dom34-Hbs1 complex recognizes ribosomes stalled at the 3' end of an mRNA and engages stalled ribosomes by destabilizing mRNA in the mRNA channel. Following ribosome-binding, the Pelota-HBS1L complex promotes the disassembly of stalled ribosomes, followed by degradation of damaged mRNAs as part of the NGD pathway. In Schizosaccharomyces pombe (strain 972 / ATCC 24843) (Fission yeast), this protein is Elongation factor 1 alpha-like protein.